We begin with the raw amino-acid sequence, 291 residues long: Ribosomal RNA small subunit methyltransferase I (291 aa).

Belongs to the methyltransferase superfamily. RsmI family.

Its subcellular location is the cytoplasm. It carries out the reaction cytidine(1402) in 16S rRNA + S-adenosyl-L-methionine = 2'-O-methylcytidine(1402) in 16S rRNA + S-adenosyl-L-homocysteine + H(+). Catalyzes the 2'-O-methylation of the ribose of cytidine 1402 (C1402) in 16S rRNA. This Neisseria meningitidis serogroup B (strain ATCC BAA-335 / MC58) protein is Ribosomal RNA small subunit methyltransferase I.